Reading from the N-terminus, the 298-residue chain is Osmoprotective compounds uptake permease protein GgtD (298 aa).

7 consecutive transmembrane segments (helical) span residues Ile26–Ile46, Ile97–Ala117, Leu126–Val146, Thr158–Leu178, Leu207–Val227, Leu231–Leu251, and Tyr263–Leu283. Positions Phe91–Leu283 constitute an ABC transmembrane type-1 domain.

Belongs to the binding-protein-dependent transport system permease family. The complex is composed of two ATP-binding proteins (GgtA), two transmembrane proteins (GgtC and GgtD) and a solute-binding protein (GgtB).

It localises to the cell membrane. Its function is as follows. Part of the ABC transporter complex GgtABCD involved in the uptake of the osmoprotective compounds glucosylglycerol (GG), sucrose and trehalose. Responsible for the translocation of the substrate across the membrane. The sequence is that of Osmoprotective compounds uptake permease protein GgtD from Synechocystis sp. (strain ATCC 27184 / PCC 6803 / Kazusa).